The chain runs to 330 residues: uncharacterized protein (330 aa).

The next 10 helical transmembrane spans lie at 27 to 47 (MGAY…VVVG), 56 to 76 (VFLS…MLLF), 90 to 110 (VFVL…CLLY), 119 to 139 (ESGI…FFLL), 147 to 167 (TLIG…FGAG), 176 to 196 (LFGN…TLMA), 206 to 226 (LAIS…FALF), 243 to 263 (YVLY…YSGV), 270 to 290 (VSGI…GVIL), and 294 to 314 (FEFV…VTVI). EamA domains follow at residues 38–163 (AIVG…AINL) and 187–314 (IGEA…VTVI).

This sequence belongs to the EamA transporter family.

It localises to the cell membrane. This is an uncharacterized protein from Bacillus subtilis (strain 168).